Reading from the N-terminus, the 856-residue chain is MGTTASTAQQTVSAGTPFEGLQGSGTMDSRHSVSIHSFQSTSLHNSKAKSIIPNKVAPVVITYNCKEEFQIHDELLKAHYTLGRLSDNTPEHYLVQGRYFLVRDVTEKMDVLGTVGSCGAPNFRQVQGGLTVFGMGQPSLSGFRRVLQKLQKDGHRECVIFCVREEPVLFLRADEDFVSYTPRDKQNLHENLQGLGPGVRVESLELAIRKEIHDFAQLSENTYHVYHNTEDLWGEPHAVAIHGEDDLHVTEEVYKRPLFLQPTYRYHRLPLPEQGSPLEAQLDAFVSVLRETPSLLQLRDAHGPPPALVFSCQMGVGRTNLGMVLGTLILLHRSGTTSQPEAAPTQAKPLPMEQFQVIQSFLRMVPQGRRMVEEVDRAITACAELHDLKEVVLENQKKLEGIRPESPAQGSGSRHSVWQRALWSLERYFYLILFNYYLHEQYPLAFALSFSRWLCAHPELYRLPVTLSSAGPVAPRDLIARGSLREDDLVSPDALSTVREMDVANFRRVPRMPIYGTAQPSAKALGSILAYLTDAKRRLRKVVWVSLREEAVLECDGHTYSLRWPGPPVAPDQLETLEAQLKAHLSEPPPGKEGPLTYRFQTCLTMQEVFSQHRRACPGLTYHRIPMPDFCAPREEDFDQLLEALRAALSKDPGTGFVFSCLSGQGRTTTAMVVAVLAFWHIQGFPEVGEEELVSVPDAKFTKGEFQVVMKVVQLLPDGHRVKKEVDAALDTVSETMTPMHYHLREIIICTYRQAKAAKEAQEMRRLQLRSLQYLERYVCLILFNAYLHLEKADSWQRPFSTWMQEVASKAGIYEILNELGFPELESGEDQPFSRLRYRWQEQSCSLEPSAPEDLL.

Over residues 1–16 (MGTTASTAQQTVSAGT) the composition is skewed to low complexity. Positions 1–29 (MGTTASTAQQTVSAGTPFEGLQGSGTMDS) are disordered. G2 carries N-myristoyl glycine lipidation. Phosphoserine is present on S86.

Belongs to the paladin family. As to expression, expressed in endothelial cells, and in certain larger vessels, in mural cells. In the brain, possibly expressed in microglia. Expressed in peripheral blood mononuclear cells (at protein level).

Its subcellular location is the cytoplasm. The protein resides in the cytosol. The protein is Paladin (PALD1) of Homo sapiens (Human).